The primary structure comprises 336 residues: Glyceraldehyde-3-phosphate dehydrogenase (336 aa).

NAD(+) is bound by residues 12–13 (RI), Asp-34, and Met-79. Residues 150-152 (SCT), Thr-181, 210-211 (TG), and Arg-233 each bind D-glyceraldehyde 3-phosphate. Residue Cys-151 is the Nucleophile of the active site. Asn-316 is a binding site for NAD(+).

Belongs to the glyceraldehyde-3-phosphate dehydrogenase family. As to quaternary structure, homotetramer.

The protein resides in the cytoplasm. It catalyses the reaction D-glyceraldehyde 3-phosphate + phosphate + NAD(+) = (2R)-3-phospho-glyceroyl phosphate + NADH + H(+). The protein operates within carbohydrate degradation; glycolysis; pyruvate from D-glyceraldehyde 3-phosphate: step 1/5. The protein is Glyceraldehyde-3-phosphate dehydrogenase of Echinococcus multilocularis (Fox tapeworm).